A 354-amino-acid polypeptide reads, in one-letter code: Variable large protein 15/16 (354 aa).

Positions 1-18 (MRKRISAIIMTLFMVLVS) are cleaved as a signal peptide. A lipid anchor (N-palmitoyl cysteine) is attached at C19. A lipid anchor (S-diacylglycerol cysteine) is attached at C19. A disordered region spans residues 333 to 354 (EDKSVEATNTAEATTSGQQAKN). Polar residues predominate over residues 338–354 (EATNTAEATTSGQQAKN).

It belongs to the variable large protein (Vlp) family. Delta subfamily.

It is found in the cell outer membrane. Its function is as follows. The Vlp and Vsp proteins are antigenically distinct proteins, only one vlp or vsp gene is transcriptionally active at any one time. Switching between these genes is a mechanism of host immune response evasion. In Borrelia hermsii, this protein is Variable large protein 15/16.